The following is a 312-amino-acid chain: MEIIFYHPTFNAAWWVNALEKALPHARVREWKVGDNNPADYALVWQPPVEMLAGRRLKAVFALGAGGDAILSKLNAHPEMLDASIPLFRLEDTGMGLQMQEYAVSQVLHWFRRFDDYQALKNQALWKPLPEYTREEFSVGIMGAGVLGAKVAESLQAWGFPLRCWSRSRKSWPGVESYVGREELHAFLNQTRVLINLLPNTAQTVGIINSELLDQLPDGAYVLNLARGVHVQEADLLAALDSGKLKGAMLDVFSQEPLPQESPLWRHPRVAMTPHIAAVTRPAEAIDYISRTITQLEKGEPVTGQVDRARGY.

Arg-227 is a catalytic residue. His-275 acts as the Proton donor in catalysis.

The protein belongs to the D-isomer specific 2-hydroxyacid dehydrogenase family. GhrA subfamily.

It localises to the cytoplasm. It carries out the reaction glycolate + NADP(+) = glyoxylate + NADPH + H(+). The catalysed reaction is (R)-glycerate + NAD(+) = 3-hydroxypyruvate + NADH + H(+). The enzyme catalyses (R)-glycerate + NADP(+) = 3-hydroxypyruvate + NADPH + H(+). Catalyzes the NADPH-dependent reduction of glyoxylate and hydroxypyruvate into glycolate and glycerate, respectively. This Salmonella dublin (strain CT_02021853) protein is Glyoxylate/hydroxypyruvate reductase A.